The sequence spans 375 residues: 2-oxoglutarate synthase subunit KorA (375 aa).

Heterotetramer of the KorA, KorB, KorC and KorD subunits.

The catalysed reaction is 2 oxidized [2Fe-2S]-[ferredoxin] + 2-oxoglutarate + CoA = succinyl-CoA + 2 reduced [2Fe-2S]-[ferredoxin] + CO2 + H(+). This Methanothermobacter marburgensis (strain ATCC BAA-927 / DSM 2133 / JCM 14651 / NBRC 100331 / OCM 82 / Marburg) (Methanobacterium thermoautotrophicum) protein is 2-oxoglutarate synthase subunit KorA (korA).